We begin with the raw amino-acid sequence, 366 residues long: tRNA pseudouridine synthase B (366 aa).

The segment at 1-55 is disordered; the sequence is MTVTTPDALLAPHDVQHAGADESAAQIRKPRDNNDPRNANRGGGNGKPRRDKRDV. Residue aspartate 92 is the Nucleophile of the active site.

This sequence belongs to the pseudouridine synthase TruB family. Type 1 subfamily.

It carries out the reaction uridine(55) in tRNA = pseudouridine(55) in tRNA. In terms of biological role, responsible for synthesis of pseudouridine from uracil-55 in the psi GC loop of transfer RNAs. The sequence is that of tRNA pseudouridine synthase B from Rhodopseudomonas palustris (strain ATCC BAA-98 / CGA009).